Consider the following 192-residue polypeptide: Ubiquitin-conjugating enzyme E2 1 (192 aa).

The disordered stretch occupies residues 1 to 28 (MTTPSRRRLMRDFKKLQEDPPAGVSGAP). One can recognise a UBC core domain in the interval 4-150 (PSRRRLMRDF…VQQIVEQSWL (147 aa)). Catalysis depends on Cys88, which acts as the Glycyl thioester intermediate. Residues 171–192 (AAPGANDADDDRMDEGASGSNA) are disordered.

This sequence belongs to the ubiquitin-conjugating enzyme family. In terms of assembly, interacts with ubr-1 and rfp-1. Interacts with ubc-13.

The catalysed reaction is S-ubiquitinyl-[E1 ubiquitin-activating enzyme]-L-cysteine + [E2 ubiquitin-conjugating enzyme]-L-cysteine = [E1 ubiquitin-activating enzyme]-L-cysteine + S-ubiquitinyl-[E2 ubiquitin-conjugating enzyme]-L-cysteine.. The protein operates within protein modification; protein ubiquitination. Functionally, catalyzes the covalent attachment of ubiquitin to other proteins. This chain is Ubiquitin-conjugating enzyme E2 1 (ubc-1), found in Caenorhabditis elegans.